A 400-amino-acid chain; its full sequence is Endoglucanase 5A (400 aa).

The first 26 residues, 1-26, serve as a signal peptide directing secretion; the sequence is MKKITTIFVVLLMTVALFSIGNTTAA. Substrate contacts are provided by residues H61, 65-66, Y92, and H127; that span reads WY. E165 serves as the catalytic Proton donor. Y228 is a binding site for substrate. The active-site Nucleophile is the E254. Substrate contacts are provided by residues 260-261, W288, and 293-295; these read AT and KDE. The disordered stretch occupies residues 328-363; it reads ESASIPPSDPTPPSDPGEPDPTPPSDPGEYPAWDPN. Pro residues predominate over residues 334 to 353; that stretch reads PSDPTPPSDPGEPDPTPPSD. The 40-residue stretch at 357–396 folds into the Chitin-binding type-3 domain; the sequence is YPAWDPNQIYTNEIVYHNGQLWQAKWWTQNQEPGDPYGPW.

The protein belongs to the glycosyl hydrolase 5 (cellulase A) family. As to quaternary structure, monomer.

The protein localises to the secreted. The catalysed reaction is Endohydrolysis of (1-&gt;4)-beta-D-glucosidic linkages in cellulose, lichenin and cereal beta-D-glucans.. This chain is Endoglucanase 5A (cel5A), found in Salipaludibacillus agaradhaerens (Bacillus agaradhaerens).